Consider the following 1040-residue polypeptide: Chromatin modification-related protein rik1 (1040 aa).

Belongs to the DDB1 family. Component of the Clr4 methyltransferase complex (ClrC) composed of at least clr4, rik1, pcu4, rbx1, raf1 and raf2. The cullin pcu4, rik1, raf1, raf2 and the ring-box protein rbx1 are components of an E3 ubiquitin ligase, whose activity is essential for heterochromatin assembly.

It is found in the nucleus. The protein resides in the cytoplasm. It localises to the cytoskeleton. Its subcellular location is the microtubule organizing center. The protein localises to the spindle pole body. It is found in the chromosome. In terms of biological role, component of the Clr4 methyltransferase complex (ClrC) which contributes to the establishment of heterochromatin by specifically methylating histone H3 to form H3K9me. ClrC preferentially ubiquitylates H3K14 and ClrC-mediated H3 ubiquitination promotes clr4 methyltransferase activity for the methylation of H3K9. H3K9me represents a specific tag for epigenetic transcriptional repression by recruiting swi6/HP1 to methylated histones which leads to transcriptional silencing within centromeric heterochromatin, telomeric regions and at the silent mating-type loci. Rik1 is involved in the RNAi-mediated targeting of ClrC to heterochromatic repeat elements. Rik1 also has a function in meiotic telomere clustering. In Schizosaccharomyces pombe (strain 972 / ATCC 24843) (Fission yeast), this protein is Chromatin modification-related protein rik1 (rik1).